Here is a 454-residue protein sequence, read N- to C-terminus: Mannosylfructose-phosphate synthase (454 aa).

This sequence belongs to the glycosyltransferase 1 family. The cofactor is Mg(2+). Requires Mn(2+) as cofactor.

The catalysed reaction is beta-D-fructose 6-phosphate + GDP-alpha-D-mannose = beta-D-fructofuranosyl alpha-D-mannopyranoside 6(F)-phosphate + GDP + H(+). Its pathway is carbohydrate metabolism; mannosylfructose biosynthesis; beta-D-fructofuranosyl alpha-D-mannopyranoside from D-fructose 6-phosphate and GDP-alpha-D-mannose: step 1/2. The polypeptide is Mannosylfructose-phosphate synthase (Agrobacterium fabrum (strain C58 / ATCC 33970) (Agrobacterium tumefaciens (strain C58))).